Reading from the N-terminus, the 354-residue chain is Ornithine transcarbamylase, mitochondrial (354 aa).

Residues 1–32 (MLSNLRILLNNAALRKGHTSVVRHFWCGKPVQ) constitute a mitochondrion transit peptide. K70 is subject to N6-acetyllysine; alternate. Residue K70 is modified to N6-succinyllysine; alternate. K80 is subject to N6-succinyllysine. At K88 the chain carries N6-acetyllysine; alternate. K88 carries the N6-succinyllysine; alternate modification. A carbamoyl phosphate-binding site is contributed by 90-94 (STRTR). S133 carries the post-translational modification Phosphoserine. Residue R141 coordinates carbamoyl phosphate. R141 serves as a coordination point for L-ornithine. Residue K144 is modified to N6-acetyllysine; alternate. K144 carries the post-translational modification N6-succinyllysine; alternate. H168 serves as a coordination point for carbamoyl phosphate. L-ornithine is bound at residue N199. 3 positions are modified to N6-acetyllysine; alternate: K221, K231, and K238. N6-succinyllysine; alternate is present on residues K221, K231, and K238. An N6-acetyllysine modification is found at K243. 263–267 (DTWIS) provides a ligand contact to L-ornithine. Residues K274 and K289 each carry the N6-succinyllysine modification. K292 carries the post-translational modification N6-acetyllysine; alternate. N6-succinyllysine; alternate is present on K292. Position 302 to 305 (302 to 305 (HCLP)) interacts with L-ornithine. C303 is an active-site residue. K307 carries the post-translational modification N6-acetyllysine; alternate. An N6-succinyllysine; alternate modification is found at K307. Residue R330 participates in carbamoyl phosphate binding. R330 contributes to the L-ornithine binding site.

Belongs to the aspartate/ornithine carbamoyltransferase superfamily. OTCase family. As to quaternary structure, homotrimer. Post-translationally, acetylation at Lys-88 negatively regulates ornithine carbamoyltransferase activity in response to nutrient signals.

The protein localises to the mitochondrion matrix. It carries out the reaction carbamoyl phosphate + L-ornithine = L-citrulline + phosphate + H(+). It functions in the pathway nitrogen metabolism; urea cycle; L-citrulline from L-ornithine and carbamoyl phosphate: step 1/1. Negatively regulated by lysine acetylation. Functionally, catalyzes the second step of the urea cycle, the condensation of carbamoyl phosphate with L-ornithine to form L-citrulline. The urea cycle ensures the detoxification of ammonia by converting it to urea for excretion. The polypeptide is Ornithine transcarbamylase, mitochondrial (Mus musculus (Mouse)).